A 276-amino-acid chain; its full sequence is Bis(5'-nucleosyl)-tetraphosphatase, symmetrical (276 aa).

It belongs to the Ap4A hydrolase family.

It carries out the reaction P(1),P(4)-bis(5'-adenosyl) tetraphosphate + H2O = 2 ADP + 2 H(+). Functionally, hydrolyzes diadenosine 5',5'''-P1,P4-tetraphosphate to yield ADP. The chain is Bis(5'-nucleosyl)-tetraphosphatase, symmetrical from Tolumonas auensis (strain DSM 9187 / NBRC 110442 / TA 4).